A 1012-amino-acid polypeptide reads, in one-letter code: Klotho (1012 aa).

A signal peptide spans 1–33 (MPASAPPRRPRPPPPSLSLLLVLLGLGGRRLRA). The Extracellular segment spans residues 34–981 (EPGDGAQTWA…ECSFFHTRKS (948 aa)). 2 glycosyl hydrolase-1 regions span residues 57–506 (FQGT…KNGF) and 515–953 (LEGT…SNGF). Asn106, Asn159, Asn283, Asn344, Asn607, Asn612, and Asn694 each carry an N-linked (GlcNAc...) asparagine glycan. The chain crosses the membrane as a helical span at residues 982–1002 (LLAFIAFLFFASIISLSLIFY). Topologically, residues 1003–1012 (YSKKGRRSYK) are cytoplasmic.

The protein belongs to the glycosyl hydrolase 1 family. Klotho subfamily. As to quaternary structure, homodimer. Interacts with FGF23 and FGFR1. In terms of processing, N-glycosylated. Present in cortical renal tubules (at protein level). Soluble peptide is present in serum and cerebrospinal fluid. Expressed in kidney, placenta, small intestine and prostate. Down-regulated in renal cell carcinomas, hepatocellular carcinomas, and in chronic renal failure kidney.

It is found in the cell membrane. The protein resides in the apical cell membrane. It localises to the secreted. It carries out the reaction a beta-D-glucuronoside + H2O = D-glucuronate + an alcohol. May have weak glycosidase activity towards glucuronylated steroids. However, it lacks essential active site Glu residues at positions 239 and 872, suggesting it may be inactive as a glycosidase in vivo. May be involved in the regulation of calcium and phosphorus homeostasis by inhibiting the synthesis of active vitamin D. Essential factor for the specific interaction between FGF23 and FGFR1. Its function is as follows. The Klotho peptide generated by cleavage of the membrane-bound isoform may be an anti-aging circulating hormone which would extend life span by inhibiting insulin/IGF1 signaling. This is Klotho (KL) from Homo sapiens (Human).